Reading from the N-terminus, the 207-residue chain is Hepatic lectin (207 aa).

Position 1 is an N-acetylmethionine (Met-1). The Cytoplasmic portion of the chain corresponds to 1-23 (MDEERLSDNVRLYKGGSIRQGLR). A helical; Signal-anchor for type II membrane protein membrane pass occupies residues 24-48 (SFAAVYVLLALSFLLLTLLSSVSLA). The Extracellular portion of the chain corresponds to 49–207 (RIAALSSKLS…YYVCEKPLPK (159 aa)). Asn-67 carries an N-linked (GlcNAc...) asparagine glycan. One can recognise a C-type lectin domain in the interval 77–203 (PCGAQSRQWE…TYECYYVCEK (127 aa)). 3 disulfides stabilise this stretch: Cys-78-Cys-92, Cys-109-Cys-201, and Cys-179-Cys-193.

Post-translationally, some or all of the cysteines are involved in disulfide bonds.

It is found in the membrane. Functionally, hepatic lectin is a membrane receptor protein that recognizes and binds exposed N-acetylglucosamine moieties of plasma glycoproteins, thus mediating their clearance (from the circulation) and endocytosis. This is Hepatic lectin from Gallus gallus (Chicken).